The sequence spans 335 residues: Methionine import ATP-binding protein MetN 1 (335 aa).

The ABC transporter domain occupies Ile2–Val242. Gly38–Ser45 lines the ATP pocket.

Belongs to the ABC transporter superfamily. Methionine importer (TC 3.A.1.24) family. The complex is composed of two ATP-binding proteins (MetN), two transmembrane proteins (MetI) and a solute-binding protein (MetQ).

Its subcellular location is the cell inner membrane. The enzyme catalyses L-methionine(out) + ATP + H2O = L-methionine(in) + ADP + phosphate + H(+). It catalyses the reaction D-methionine(out) + ATP + H2O = D-methionine(in) + ADP + phosphate + H(+). Its function is as follows. Part of the ABC transporter complex MetNIQ involved in methionine import. Responsible for energy coupling to the transport system. The chain is Methionine import ATP-binding protein MetN 1 from Pseudomonas fluorescens (strain ATCC BAA-477 / NRRL B-23932 / Pf-5).